Reading from the N-terminus, the 244-residue chain is NAD(P)H-quinone oxidoreductase subunit K (244 aa).

[4Fe-4S] cluster-binding residues include Cys60, Cys61, Cys125, and Cys156.

It belongs to the complex I 20 kDa subunit family. As to quaternary structure, NDH-1 can be composed of about 15 different subunits; different subcomplexes with different compositions have been identified which probably have different functions. [4Fe-4S] cluster serves as cofactor.

It localises to the cellular thylakoid membrane. It catalyses the reaction a plastoquinone + NADH + (n+1) H(+)(in) = a plastoquinol + NAD(+) + n H(+)(out). The catalysed reaction is a plastoquinone + NADPH + (n+1) H(+)(in) = a plastoquinol + NADP(+) + n H(+)(out). Its function is as follows. NDH-1 shuttles electrons from an unknown electron donor, via FMN and iron-sulfur (Fe-S) centers, to quinones in the respiratory and/or the photosynthetic chain. The immediate electron acceptor for the enzyme in this species is believed to be plastoquinone. Couples the redox reaction to proton translocation, and thus conserves the redox energy in a proton gradient. Cyanobacterial NDH-1 also plays a role in inorganic carbon-concentration. The chain is NAD(P)H-quinone oxidoreductase subunit K from Prochlorococcus marinus (strain MIT 9515).